The primary structure comprises 462 residues: Retinoic acid receptor alpha (462 aa).

A modulating region spans residues 1-87 (MASNSSSCPT…PPPLPRIYKP (87 aa)). Over residues 52–64 (GYSTPSPATIETQ) the composition is skewed to polar residues. The segment at 52-77 (GYSTPSPATIETQSSSSEEIVPSPPS) is disordered. Phosphoserine; by CDK7 is present on Ser77. 2 NR C4-type zinc fingers span residues 88–108 (CFVC…CEGC) and 124–148 (CHRD…LQKC). The nuclear receptor DNA-binding region spans 88 to 153 (CFVCQDKSSG…RLQKCFDVGM (66 aa)). Ser96 is subject to Phosphoserine; by PKB/AKT1. The segment at 154–182 (SKESVRNDRNKKKKEAPKPECSESYTLTP) is hinge. Residues Lys166 and Lys171 each participate in a glycyl lysine isopeptide (Lys-Gly) (interchain with G-Cter in SUMO) cross-link. One can recognise an NR LBD domain in the interval 183 to 417 (EVGELIEKVR…PLIQEMLENS (235 aa)). Position 219 is a phosphoserine; by PKA (Ser219). All-trans-retinoate is bound at residue Cys235. Residues 254–258 (IADQI) carry the UBR5-degron motif. An all-trans-retinoate-binding site is contributed by Ser287. At Lys347 the chain carries N6,N6,N6-trimethyllysine. Phosphoserine; by PKA and RPS6KA5 is present on Ser369. A Glycyl lysine isopeptide (Lys-Gly) (interchain with G-Cter in SUMO) cross-link involves residue Lys399. Residues 404 to 419 (GSMPPLIQEMLENSEG) form a required for binding corepressor NCOR1 region. Positions 408-416 (PLIQEMLEN) match the 9aaTAD motif. Residues 420–462 (LDTLSGQSGGGTRDGGGLAPPPGSCSPSLSPSSHRSSPATQSP) are disordered. Residues 426 to 437 (QSGGGTRDGGGL) show a composition bias toward gly residues. A compositionally biased stretch (low complexity) spans 444 to 462 (CSPSLSPSSHRSSPATQSP).

It belongs to the nuclear hormone receptor family. NR1 subfamily. Heterodimer; with RXRA. Binds DNA preferentially as a heterodimer. RXRA serves as enhancer to induce RARA binding to RARE. Interacts with RXRG. Interacts with NCOA3 and NCOA6 coactivators, leading to a strong increase of transcription of target genes. Interacts with NCOA7; the interaction requires ligand-binding. Interacts (via the ligand-binding domain) with PRAME; interaction is direct and ligand (retinoic acid)-dependent. Interacts with PRKAR1A; the interaction negatively regulates RARA transcriptional activity. Interacts with NCOR1; the interaction occurs in the absence of ligand and represses transcriptional activity. Interacts with NCOR2. Interacts with PRMT2. Interacts with LRIF1. Interacts with ASXL1 and NCOA1. Interacts with ACTN4. Interacts with CDK7; the interaction is enhanced by interaction with GTF2H3. Interacts with GTF2H3; the interaction requires prior phosphorylation on Ser-369 which then enhances interaction with CDK7. In a complex with HDAC3, HDAC5 and HDAC7; the HDACs serve as corepressors of RARA, causing its deacetylation and inhibition of RARE DNA element binding; association with HDAC3, HDAC5 and HDAC7 is increased upon oscillatory shear stress. In the absence of hormonal ligand, interacts with TACC1. In terms of processing, phosphorylated on serine and threonine residues. Phosphorylation does not change during cell cycle. Phosphorylation on Ser-77 is crucial for the N-terminal AF1 transcriptional activity. Under stress conditions, MAPK8 enhances phosphorylation on Thr-181, Ser-445 and Ser-461 leading to RARA ubiquitination and degradation. Phosphorylation by AKT1 inhibits the transactivation activity. On retinoic acid stimulation, phosphorylation on Ser-369 by RPS6KA5 promotes interaction with GTF2H3 and the CDK7-mediated phosphorylation of Ser-77. Ubiquitinated by UBR5, leading to its degradation: UBR5 specifically recognizes and binds ligand-bound RARA when it is not associated with coactivators (NCOAs). In presence of NCOAs, the UBR5-degron is not accessible, preventing its ubiquitination and degradation. Post-translationally, sumoylated with SUMO2, mainly on Lys-399 which is also required for SENP6 binding. On all-trans retinoic acid (ATRA) binding, a conformational change may occur that allows sumoylation on two additional site, Lys-166 and Lys-171. Probably desumoylated by SENP6. Sumoylation levels determine nuclear localization and regulate ATRA-mediated transcriptional activity. In terms of processing, acetylated; acetylation is increased upon pulsatile shear stress and decreased upon oscillatory shear stress. In terms of tissue distribution, expressed in Sertoli cells and germ cells.

It is found in the nucleus. Its subcellular location is the cytoplasm. Its function is as follows. Receptor for retinoic acid. Retinoic acid receptors bind as heterodimers to their target response elements in response to their ligands, all-trans or 9-cis retinoic acid, and regulate gene expression in various biological processes. The RXR/RAR heterodimers bind to the retinoic acid response elements (RARE) composed of tandem 5'-AGGTCA-3' sites known as DR1-DR5. In the absence of ligand, the RXR-RAR heterodimers associate with a multiprotein complex containing transcription corepressors that induce histone deacetylation, chromatin condensation and transcriptional suppression. On ligand binding, the corepressors dissociate from the receptors and associate with the coactivators leading to transcriptional activation. Formation of heterocomplex with histone deacetylases might lead to inhibition of RARE DNA element binding and to transcriptional repression. Transcriptional activation and RARE DNA element binding might be supported by the transcription factor KLF2. RARA plays an essential role in the regulation of retinoic acid-induced germ cell development during spermatogenesis. Has a role in the survival of early spermatocytes at the beginning prophase of meiosis. In Sertoli cells, may promote the survival and development of early meiotic prophase spermatocytes. In concert with RARG, required for skeletal growth, matrix homeostasis and growth plate function. Together with RXRA, positively regulates microRNA-10a expression, thereby inhibiting the GATA6/VCAM1 signaling response to pulsatile shear stress in vascular endothelial cells. In association with HDAC3, HDAC5 and HDAC7 corepressors, plays a role in the repression of microRNA-10a and thereby promotes the inflammatory response. This Mus musculus (Mouse) protein is Retinoic acid receptor alpha (Rara).